Consider the following 121-residue polypeptide: Fluoride-specific ion channel FluC 1 (121 aa).

4 helical membrane passes run 3-23, 35-55, 64-84, and 92-112; these read YVYI…ISFL, IANL…IAFF, AITT…LELI, and FITL…LCYV. 2 residues coordinate Na(+): Gly-71 and Thr-74.

This sequence belongs to the fluoride channel Fluc/FEX (TC 1.A.43) family.

The protein localises to the cell membrane. It catalyses the reaction fluoride(in) = fluoride(out). Na(+) is not transported, but it plays an essential structural role and its presence is essential for fluoride channel function. Functionally, fluoride-specific ion channel. Important for reducing fluoride concentration in the cell, thus reducing its toxicity. This is Fluoride-specific ion channel FluC 1 from Staphylococcus aureus (strain NCTC 8325 / PS 47).